The primary structure comprises 286 residues: Probable 4-deoxy-4-formamido-L-arabinose-phosphoundecaprenol deformylase ArnD (286 aa).

The 248-residue stretch at 1–248 folds into the NodB homology domain; that stretch reads MGTKLGVPNL…IAINEGINFC (248 aa).

The protein belongs to the polysaccharide deacetylase family. ArnD deformylase subfamily.

It catalyses the reaction 4-deoxy-4-formamido-alpha-L-arabinopyranosyl di-trans,octa-cis-undecaprenyl phosphate + H2O = 4-amino-4-deoxy-alpha-L-arabinopyranosyl di-trans,octa-cis-undecaprenyl phosphate + formate. Its pathway is glycolipid biosynthesis; 4-amino-4-deoxy-alpha-L-arabinose undecaprenyl phosphate biosynthesis; 4-amino-4-deoxy-alpha-L-arabinose undecaprenyl phosphate from UDP-4-deoxy-4-formamido-beta-L-arabinose and undecaprenyl phosphate: step 2/2. It functions in the pathway bacterial outer membrane biogenesis; lipopolysaccharide biosynthesis. In terms of biological role, catalyzes the deformylation of 4-deoxy-4-formamido-L-arabinose-phosphoundecaprenol to 4-amino-4-deoxy-L-arabinose-phosphoundecaprenol. The modified arabinose is attached to lipid A and is required for resistance to polymyxin and cationic antimicrobial peptides. The polypeptide is Probable 4-deoxy-4-formamido-L-arabinose-phosphoundecaprenol deformylase ArnD (Wigglesworthia glossinidia brevipalpis).